The primary structure comprises 143 residues: MQLNDLKPAKGARHQKLRVGRGIGSGKGKTAGRGHKGQHSRAGGYHKVGFEGGQMPLQRRVPKFGFTSRKELISAEVRLGELNKISGDVVDLASLKAANIISRQIKRVKIFAAGKLEKPVTIRGLRVTKGVKAAIEAAGGKIE.

The tract at residues glycine 20 to glycine 52 is disordered. The span at threonine 30–histidine 39 shows a compositional bias: basic residues.

The protein belongs to the universal ribosomal protein uL15 family. As to quaternary structure, part of the 50S ribosomal subunit.

Binds to the 23S rRNA. This is Large ribosomal subunit protein uL15 from Coxiella burnetii (strain CbuK_Q154) (Coxiella burnetii (strain Q154)).